Reading from the N-terminus, the 360-residue chain is Phospho-N-acetylmuramoyl-pentapeptide-transferase (360 aa).

Transmembrane regions (helical) follow at residues 27 to 47, 73 to 93, 98 to 118, 134 to 154, 168 to 188, 199 to 219, 239 to 259, 263 to 283, 288 to 308, and 337 to 357; these read GAVM…IEWL, TMGG…WADL, VWAV…DDYL, LVAQ…LGQG, LTFN…VGAS, GLAI…AYLV, LAVF…FNAP, VFMG…VSVV, IVLA…IVQV, and TVVI…LSTL.

Belongs to the glycosyltransferase 4 family. MraY subfamily. It depends on Mg(2+) as a cofactor.

It localises to the cell inner membrane. The enzyme catalyses UDP-N-acetyl-alpha-D-muramoyl-L-alanyl-gamma-D-glutamyl-meso-2,6-diaminopimeloyl-D-alanyl-D-alanine + di-trans,octa-cis-undecaprenyl phosphate = di-trans,octa-cis-undecaprenyl diphospho-N-acetyl-alpha-D-muramoyl-L-alanyl-D-glutamyl-meso-2,6-diaminopimeloyl-D-alanyl-D-alanine + UMP. It functions in the pathway cell wall biogenesis; peptidoglycan biosynthesis. Its function is as follows. Catalyzes the initial step of the lipid cycle reactions in the biosynthesis of the cell wall peptidoglycan: transfers peptidoglycan precursor phospho-MurNAc-pentapeptide from UDP-MurNAc-pentapeptide onto the lipid carrier undecaprenyl phosphate, yielding undecaprenyl-pyrophosphoryl-MurNAc-pentapeptide, known as lipid I. In Rhodospirillum rubrum (strain ATCC 11170 / ATH 1.1.1 / DSM 467 / LMG 4362 / NCIMB 8255 / S1), this protein is Phospho-N-acetylmuramoyl-pentapeptide-transferase.